The sequence spans 778 residues: MAATKKSTATAAHQIIPSQPTSMSADKFLFSCLQVFVLFFEWARSFLLSTQSRLSAVPAENARLEPSKPISEEEESVIEKPASSITPRYSNLVDPSTYNDLGLCSALPLRVHKFAHLADKGALRAQEDWKRLVGPIRNFTGCLSPRFNGIAVAVPECIPERLEIVTYANEFAFLHDDILDNVGKEEGDHENNEMAAGFGSVLNPADNVKMSASGKSQMQAKLILELLAINEPQAMVLLKCWEGLVKGESGSQHFNFQRLDEYLPHRVINLGQTFWFGIITFAMGLTISPDEAEKANNITDPAYATLALANDYFSWEKEYIEFKQNPTSDDMANAIWIIMKEHSVDLEEAKKICQDKIRESCEEYVRRHRQFEREATGKVSTDLLRYLAALEFSISGNVVWSQYTHRYNFHKPAAKENEDTDDEGAKSDDSKTTLNDSTDSTVVDVKTPATSGLLSSANDVLMSRTAKSLVGPILDVQLPELPDKVVLSPSQYVKSLPSKKVRHHAIDALNIWFNVPEAELEVIKEAIDLLHNSSLMLDDIEDDSPLRRGFPSTHVVYGISQTINSANYLYVMALEMTQRLNSPACLNVFIDELKRLHIGQSLDLYWTANVQCPSLEEYLKMVDYKTGGLFQMVAKLMALKSPMAGRVPDLSNMTTLFGRYFQIRDDYQNLMSEEYTNQKGWCEDLDEGKFSLPLIHSLTTKPNVRLQAMLHQRLINGKMTFEMKKLALDHLAETKSLEYTKEMLGYMYTQLQKEVDFLERQTGSENFLLRLLLKRLQV.

Positions 1-414 (MAATKKSTAT…HRYNFHKPAA (414 aa)) are terpene cyclase. Residues aspartate 176 and aspartate 180 each coordinate Mg(2+). Aspartate 176 serves as a coordination point for substrate. The DDXXD 1 signature appears at 176–180 (DDILD). Substrate contacts are provided by residues 266–269 (RVIN), asparagine 310, 314–318 (SWEKE), and 406–407 (RY). The short motif at 310-318 (NDYFSWEKE) is the NSE/DTE element. The segment covering 414 to 431 (AKENEDTDDEGAKSDDSK) has biased composition (basic and acidic residues). A prenyltransferase region spans residues 415–778 (KENEDTDDEG…LRLLLKRLQV (364 aa)). Residues 416-454 (ENEDTDDEGAKSDDSKTTLNDSTDSTVVDVKTPATSGLL) form a disordered region. Residues lysine 499, arginine 502, and histidine 531 each coordinate isopentenyl diphosphate. Residues aspartate 538 and aspartate 542 each contribute to the Mg(2+) site. The DDXXD 2 signature appears at 538 to 542 (DDIED). Arginine 547 is a binding site for dimethylallyl diphosphate. Arginine 548 provides a ligand contact to isopentenyl diphosphate. Residues lysine 625, threonine 626, glutamine 662, asparagine 669, lysine 679, and lysine 689 each coordinate dimethylallyl diphosphate.

In the N-terminal section; belongs to the terpene synthase family. It in the C-terminal section; belongs to the FPP/GGPP synthase family. In terms of assembly, hexamer. Mg(2+) is required as a cofactor.

It catalyses the reaction isopentenyl diphosphate + (2E,6E)-farnesyl diphosphate = (2E,6E,10E)-geranylgeranyl diphosphate + diphosphate. It carries out the reaction isopentenyl diphosphate + (2E,6E,10E)-geranylgeranyl diphosphate = (2E,6E,10E,14E)-geranylfarnesyl diphosphate + diphosphate. The catalysed reaction is (2E,6E,10E,14E)-geranylfarnesyl diphosphate = preasperterpenoid A + diphosphate. It participates in secondary metabolite biosynthesis; terpenoid biosynthesis. In terms of biological role, bifunctional sesterterpene synthase that possesses both prenyl transferase and terpene cyclase activity, converting isopentenyl diphosphate and dimethylallyl diphosphate into geranylfarnesyl diphosphate (GFPP) and further converting GFPP into preasperterpenoid A. The chain is Preasperterpenoid A synthase PvPS from Talaromyces verruculosus (Penicillium verruculosum).